Consider the following 525-residue polypeptide: Phosphoenolpyruvate carboxykinase (ATP) (525 aa).

Residues Arg-52, Tyr-186, and Lys-192 each coordinate substrate. Residues Lys-192, His-211, and 228–236 (GLSGTGKTT) each bind ATP. Lys-192 and His-211 together coordinate Mn(2+). Mn(2+) is bound at residue Asp-249. Residues Glu-277, Arg-314, 433 to 434 (RI), and Thr-439 each bind ATP. A substrate-binding site is contributed by Arg-314.

The protein belongs to the phosphoenolpyruvate carboxykinase (ATP) family. Mn(2+) is required as a cofactor.

The protein resides in the cytoplasm. The enzyme catalyses oxaloacetate + ATP = phosphoenolpyruvate + ADP + CO2. It functions in the pathway carbohydrate biosynthesis; gluconeogenesis. Its function is as follows. Involved in the gluconeogenesis. Catalyzes the conversion of oxaloacetate (OAA) to phosphoenolpyruvate (PEP) through direct phosphoryl transfer between the nucleoside triphosphate and OAA. This chain is Phosphoenolpyruvate carboxykinase (ATP), found in Fusobacterium nucleatum subsp. nucleatum (strain ATCC 25586 / DSM 15643 / BCRC 10681 / CIP 101130 / JCM 8532 / KCTC 2640 / LMG 13131 / VPI 4355).